We begin with the raw amino-acid sequence, 682 residues long: Tail-specific protease (682 aa).

The signal sequence occupies residues 1 to 22 (MNTFFRLTALAGLLALAGQSFA). The region spanning 238 to 322 (NTEMSLSLEG…SKVRLEILPA (85 aa)) is the PDZ domain. Catalysis depends on charge relay system residues S452, D463, and K477.

Belongs to the peptidase S41A family.

It is found in the cell inner membrane. It carries out the reaction The enzyme shows specific recognition of a C-terminal tripeptide, Xaa-Yaa-Zaa, in which Xaa is preferably Ala or Leu, Yaa is preferably Ala or Tyr, and Zaa is preferably Ala, but then cleaves at a variable distance from the C-terminus. A typical cleavage is -Ala-Ala-|-Arg-Ala-Ala-Lys-Glu-Asn-Tyr-Ala-Leu-Ala-Ala.. Involved in the cleavage of a C-terminal peptide of 11 residues from the precursor form of penicillin-binding protein 3 (PBP3). May be involved in protection of the bacterium from thermal and osmotic stresses. The sequence is that of Tail-specific protease (prc) from Salmonella typhimurium (strain LT2 / SGSC1412 / ATCC 700720).